Here is a 328-residue protein sequence, read N- to C-terminus: UDP-glucose 4-epimerase (328 aa).

Thr-119 contacts substrate. Tyr-143 serves as the catalytic Proton acceptor.

It belongs to the NAD(P)-dependent epimerase/dehydratase family. NAD(+) is required as a cofactor.

The catalysed reaction is UDP-alpha-D-glucose = UDP-alpha-D-galactose. It functions in the pathway carbohydrate metabolism; galactose metabolism. It participates in glycan metabolism; exopolysaccharide biosynthesis. This Rhizobium meliloti (strain 1021) (Ensifer meliloti) protein is UDP-glucose 4-epimerase (exoB).